The sequence spans 505 residues: Lysine--tRNA ligase (505 aa).

Positions 415 and 422 each coordinate Mg(2+).

Belongs to the class-II aminoacyl-tRNA synthetase family. In terms of assembly, homodimer. The cofactor is Mg(2+).

Its subcellular location is the cytoplasm. The catalysed reaction is tRNA(Lys) + L-lysine + ATP = L-lysyl-tRNA(Lys) + AMP + diphosphate. This chain is Lysine--tRNA ligase (lysS), found in Escherichia coli (strain K12).